The primary structure comprises 276 residues: Diaminopimelate epimerase (276 aa).

Substrate contacts are provided by Asn13, Gln46, and Asn66. Cys75 serves as the catalytic Proton donor. Substrate-binding positions include 76 to 77 (GN), Asn159, Asn192, and 210 to 211 (ER). The Proton acceptor role is filled by Cys219. 220 to 221 (GS) serves as a coordination point for substrate.

Belongs to the diaminopimelate epimerase family. Homodimer.

The protein resides in the cytoplasm. The enzyme catalyses (2S,6S)-2,6-diaminopimelate = meso-2,6-diaminopimelate. It participates in amino-acid biosynthesis; L-lysine biosynthesis via DAP pathway; DL-2,6-diaminopimelate from LL-2,6-diaminopimelate: step 1/1. Catalyzes the stereoinversion of LL-2,6-diaminopimelate (L,L-DAP) to meso-diaminopimelate (meso-DAP), a precursor of L-lysine and an essential component of the bacterial peptidoglycan. The chain is Diaminopimelate epimerase from Vibrio atlanticus (strain LGP32) (Vibrio splendidus (strain Mel32)).